The following is a 300-amino-acid chain: Exonuclease (300 aa).

The catalysed reaction is Exonucleolytic cleavage in the 5'- to 3'-direction to yield nucleoside 5'-phosphates.. Plays an essential role in phage DNA replication by participating in the removal of DNA-linked RNA primers. Participates also in T7 DNA packaging, host DNA degradation and phage genetic recombination. The sequence is that of Exonuclease from Escherichia phage T7 (Bacteriophage T7).